The primary structure comprises 291 residues: MSWFESLILGLVQGLTEFLPVSSSAHLRLTAAFAGWEDPGAAFTAITQIGTEAAVLIYFRKDIARIISAWFRSLVNKEMRHDHDAQMGWLVIVGSIPIGVLGVTLKDQIEGPFRDLRITATMLIVMGVILGIADRLAARDETGGKHRAAKERKKLQDLNIRDGLVFGACQAMALIPGVSRSGATISGGLLIGYTRESAARYSFLLAIPAVLASGVFELKDAAASGHVAWGPTVFATVIAFVSGYAVIAWFMKFISNKSFMPFVWYRIALGIAIIALVATGALSPHAAESAG.

A run of 6 helical transmembrane segments spans residues 39-59, 85-105, 118-138, 203-223, 231-251, and 262-282; these read PGAA…LIYF, AQMG…GVTL, ITAT…RLAA, FLLA…DAAA, PTVF…AWFM, and FVWY…TGAL.

This sequence belongs to the UppP family.

It localises to the cell membrane. It carries out the reaction di-trans,octa-cis-undecaprenyl diphosphate + H2O = di-trans,octa-cis-undecaprenyl phosphate + phosphate + H(+). Catalyzes the dephosphorylation of undecaprenyl diphosphate (UPP). Confers resistance to bacitracin. The chain is Undecaprenyl-diphosphatase 2 from Streptomyces avermitilis (strain ATCC 31267 / DSM 46492 / JCM 5070 / NBRC 14893 / NCIMB 12804 / NRRL 8165 / MA-4680).